The primary structure comprises 730 residues: uncharacterized protein (730 aa).

Phosphoserine is present on residues Ser-82 and Ser-89. Disordered regions lie at residues 82 to 114 (SPVR…TGSY) and 447 to 468 (NTNH…SKNE). Positions 89 to 98 (SIQPSNSGKN) are enriched in polar residues. Low complexity predominate over residues 449-460 (NHNFTTNNNNEN). Phosphoserine occurs at positions 483 and 651.

This is an uncharacterized protein from Saccharomyces cerevisiae (strain ATCC 204508 / S288c) (Baker's yeast).